Consider the following 359-residue polypeptide: Phosphoserine aminotransferase (359 aa).

Residue Arg41 coordinates L-glutamate. Residues 75 to 76 (AS), Trp101, Thr152, Asp171, and Gln194 contribute to the pyridoxal 5'-phosphate site. At Lys195 the chain carries N6-(pyridoxal phosphate)lysine. A pyridoxal 5'-phosphate-binding site is contributed by 236–237 (NT).

It belongs to the class-V pyridoxal-phosphate-dependent aminotransferase family. SerC subfamily. As to quaternary structure, homodimer. The cofactor is pyridoxal 5'-phosphate.

The protein resides in the cytoplasm. The enzyme catalyses O-phospho-L-serine + 2-oxoglutarate = 3-phosphooxypyruvate + L-glutamate. It catalyses the reaction 4-(phosphooxy)-L-threonine + 2-oxoglutarate = (R)-3-hydroxy-2-oxo-4-phosphooxybutanoate + L-glutamate. The protein operates within amino-acid biosynthesis; L-serine biosynthesis; L-serine from 3-phospho-D-glycerate: step 2/3. It participates in cofactor biosynthesis; pyridoxine 5'-phosphate biosynthesis; pyridoxine 5'-phosphate from D-erythrose 4-phosphate: step 3/5. Functionally, catalyzes the reversible conversion of 3-phosphohydroxypyruvate to phosphoserine and of 3-hydroxy-2-oxo-4-phosphonooxybutanoate to phosphohydroxythreonine. The sequence is that of Phosphoserine aminotransferase from Acinetobacter baumannii (strain AB307-0294).